We begin with the raw amino-acid sequence, 236 residues long: tRNA (guanine-N(1)-)-methyltransferase (236 aa).

Residues Gly110 and 129 to 134 (LGDFVL) contribute to the S-adenosyl-L-methionine site.

It belongs to the RNA methyltransferase TrmD family. Homodimer.

It is found in the cytoplasm. It catalyses the reaction guanosine(37) in tRNA + S-adenosyl-L-methionine = N(1)-methylguanosine(37) in tRNA + S-adenosyl-L-homocysteine + H(+). Its function is as follows. Specifically methylates guanosine-37 in various tRNAs. The chain is tRNA (guanine-N(1)-)-methyltransferase from Clostridium perfringens (strain SM101 / Type A).